The chain runs to 61 residues: Small ribosomal subunit protein uS14 (61 aa).

Residues Cys-24, Cys-27, Cys-40, and Cys-43 each contribute to the Zn(2+) site.

The protein belongs to the universal ribosomal protein uS14 family. Zinc-binding uS14 subfamily. In terms of assembly, part of the 30S ribosomal subunit. Contacts proteins S3 and S10. The cofactor is Zn(2+).

Binds 16S rRNA, required for the assembly of 30S particles and may also be responsible for determining the conformation of the 16S rRNA at the A site. In Thermoanaerobacter sp. (strain X514), this protein is Small ribosomal subunit protein uS14.